The chain runs to 75 residues: ATP synthase subunit 9, mitochondrial (75 aa).

2 helical membrane-spanning segments follow: residues 10 to 30 and 55 to 75; these read LVLGLCMLPISAAALGVGILF and FALVETFVFMSFFFGVIVYFI.

It belongs to the ATPase C chain family. As to quaternary structure, F-type ATPases have 2 components, CF(1) - the catalytic core - and CF(0) - the membrane proton channel. CF(1) has five subunits: alpha(3), beta(3), gamma(1), delta(1), epsilon(1). CF(0) has three main subunits: a, b and c.

The protein localises to the mitochondrion membrane. Mitochondrial membrane ATP synthase (F(1)F(0) ATP synthase or Complex V) produces ATP from ADP in the presence of a proton gradient across the membrane which is generated by electron transport complexes of the respiratory chain. F-type ATPases consist of two structural domains, F(1) - containing the extramembraneous catalytic core and F(0) - containing the membrane proton channel, linked together by a central stalk and a peripheral stalk. During catalysis, ATP synthesis in the catalytic domain of F(1) is coupled via a rotary mechanism of the central stalk subunits to proton translocation. Part of the complex F(0) domain. A homomeric c-ring of probably 10 subunits is part of the complex rotary element. The sequence is that of ATP synthase subunit 9, mitochondrial (ATP9) from Paramecium tetraurelia.